The following is a 507-amino-acid chain: Maturase K (507 aa).

Belongs to the intron maturase 2 family. MatK subfamily.

It localises to the plastid. The protein resides in the chloroplast. Functionally, usually encoded in the trnK tRNA gene intron. Probably assists in splicing its own and other chloroplast group II introns. This Liriodendron tulipifera (Tuliptree) protein is Maturase K.